The primary structure comprises 248 residues: Large ribosomal subunit protein uL10m (248 aa).

A mitochondrion-targeting transit peptide spans 1-24; it reads MATLIQRSLSLAKSSTPALQFLRF.

It belongs to the universal ribosomal protein uL10 family. Component of the mitochondrial ribosome large subunit (39S) which comprises a 16S rRNA and about 50 distinct proteins.

The protein resides in the mitochondrion. In Drosophila melanogaster (Fruit fly), this protein is Large ribosomal subunit protein uL10m (mRpL10).